Consider the following 452-residue polypeptide: Glutamate--tRNA ligase 2 (452 aa).

The 'HIGH' region signature appears at 8–18; the sequence is PSPTGRLHVGN. A 'KMSKS' region motif is present at residues 246-250; it reads KLSKR. An ATP-binding site is contributed by Lys249.

It belongs to the class-I aminoacyl-tRNA synthetase family. Glutamate--tRNA ligase type 1 subfamily. In terms of assembly, monomer.

The protein localises to the cytoplasm. It catalyses the reaction tRNA(Glu) + L-glutamate + ATP = L-glutamyl-tRNA(Glu) + AMP + diphosphate. Functionally, catalyzes the attachment of glutamate to tRNA(Glu) in a two-step reaction: glutamate is first activated by ATP to form Glu-AMP and then transferred to the acceptor end of tRNA(Glu). This chain is Glutamate--tRNA ligase 2, found in Erythrobacter litoralis (strain HTCC2594).